Reading from the N-terminus, the 278-residue chain is 4-deoxy-L-threo-5-hexosulose-uronate ketol-isomerase (278 aa).

Positions 196, 198, 203, and 245 each coordinate Zn(2+).

The protein belongs to the KduI family. It depends on Zn(2+) as a cofactor.

It catalyses the reaction 5-dehydro-4-deoxy-D-glucuronate = 3-deoxy-D-glycero-2,5-hexodiulosonate. Its pathway is glycan metabolism; pectin degradation; 2-dehydro-3-deoxy-D-gluconate from pectin: step 4/5. Functionally, catalyzes the isomerization of 5-dehydro-4-deoxy-D-glucuronate to 3-deoxy-D-glycero-2,5-hexodiulosonate. This is 4-deoxy-L-threo-5-hexosulose-uronate ketol-isomerase from Shigella flexneri.